Reading from the N-terminus, the 243-residue chain is tRNA1(Val) (adenine(37)-N6)-methyltransferase (243 aa).

Belongs to the methyltransferase superfamily. tRNA (adenine-N(6)-)-methyltransferase family.

The protein localises to the cytoplasm. The catalysed reaction is adenosine(37) in tRNA1(Val) + S-adenosyl-L-methionine = N(6)-methyladenosine(37) in tRNA1(Val) + S-adenosyl-L-homocysteine + H(+). Specifically methylates the adenine in position 37 of tRNA(1)(Val) (anticodon cmo5UAC). This is tRNA1(Val) (adenine(37)-N6)-methyltransferase from Shewanella woodyi (strain ATCC 51908 / MS32).